Consider the following 289-residue polypeptide: RNA-binding protein CP31B, chloroplastic (289 aa).

The transit peptide at 1-71 directs the protein to the chloroplast; sequence MTSSVLTPSL…NSSPVVTFVS (71 aa). RRM domains follow at residues 113 to 191 and 207 to 285; these read AKLF…RAAP and FRIY…VAEE.

Post-translationally, ADP-ribosylated by the Pseudomonas syringae type III effector HopU1. ADP-ribosylation reduces the ability of the protein to bind RNA.

The protein localises to the plastid. It localises to the chloroplast. Functionally, required for specific RNA editing events in chloroplasts and stabilizes specific chloroplast mRNAs. In Arabidopsis thaliana (Mouse-ear cress), this protein is RNA-binding protein CP31B, chloroplastic.